A 191-amino-acid polypeptide reads, in one-letter code: MEYFDMRKMSVNLWRNAAGETREICTFPPAKRDFYWRASITSIAANGEFSLFPGMERIVTLLEGGEMFLESADRFNHTLKPLQPFAFAADQVVKAKLTAGQMSMDFNIMTRLDVCKAKVRIAERTFTTFGSRGGVVFVINGAWQLGDKLLTTDQGACWFDGRHTLRLLQPQGKLLFSEINWLAGHSPDQVQ.

The protein belongs to the Ves family.

In Escherichia coli (strain SMS-3-5 / SECEC), this protein is Protein Ves.